The sequence spans 297 residues: XIAP-associated factor 1 (297 aa).

A TRAF-type zinc finger spans residues 22–99; sequence LHEAHCLMYL…QLAVRLNKVD (78 aa). Residues 178-255 form a disordered region; that stretch reads AVTPSPVGKP…NGKLRASSPV (78 aa). A compositionally biased stretch (basic and acidic residues) spans 202–212; the sequence is QTSKAEKDVRP. The span at 229-245 shows a compositional bias: polar residues; the sequence is RQAPRGTNKTTNLSLKS.

Interacts with BIRC1, BIRC2, BIRC3, BIRC4, BIRC7 and BIRC8. Part of an complex consisting of BIRC4, XAF1 and BIRC5; the complex formation requires IFN-beta stimulation. Interacts with RNF114, the interaction increases XAF1 stability and proapoptotic effects, and may regulate IFN signaling.

Its subcellular location is the cytoplasm. The protein localises to the nucleus. The protein resides in the mitochondrion. Functionally, seems to function as a negative regulator of members of the IAP (inhibitor of apoptosis protein) family. Inhibits anti-caspase activity of BIRC4. Induces cleavage and inactivation of BIRC4 independent of caspase activation. Mediates TNF-alpha-induced apoptosis and is involved in apoptosis in trophoblast cells. May inhibit BIRC4 indirectly by activating the mitochondrial apoptosis pathway. After translocation to mitochondria, promotes translocation of BAX to mitochondria and cytochrome c release from mitochondria. Seems to promote the redistribution of BIRC4 from the cytoplasm to the nucleus, probably independent of BIRC4 inactivation which seems to occur in the cytoplasm. The BIRC4-XAF1 complex mediates down-regulation of BIRC5/survivin; the process requires the E3 ligase activity of BIRC4. Seems to be involved in cellular sensitivity to the proapoptotic actions of TRAIL. May be a tumor suppressor by mediating apoptosis resistance of cancer cells. The polypeptide is XIAP-associated factor 1 (XAF1) (Bos taurus (Bovine)).